A 197-amino-acid chain; its full sequence is MKQPSLIYLTGFSGSGKSTIGPLLANSLGYDFVDLDQQIEHLAGKTINRIFTEEGEAHFRDLELMVLQNYSGKSELVVSLGGGLLQNDRCFSLIISTGTLVYLHSNPLVLAKRLSHKSDRPLMKGEDGQRLSRDAIEQKILNMLEQREPRYKTAQITVETDTKRIGTTVEELTRKIERYIRRCEKKQLERNTKQRKQ.

Residue 14–19 participates in ATP binding; sequence GSGKST. Ser-18 is a Mg(2+) binding site. Residues Asp-36, Arg-60, and Gly-82 each contribute to the substrate site. ATP is bound at residue Arg-120. Arg-147 is a substrate binding site.

The protein belongs to the shikimate kinase family. In terms of assembly, monomer. Requires Mg(2+) as cofactor.

It is found in the cytoplasm. The enzyme catalyses shikimate + ATP = 3-phosphoshikimate + ADP + H(+). It functions in the pathway metabolic intermediate biosynthesis; chorismate biosynthesis; chorismate from D-erythrose 4-phosphate and phosphoenolpyruvate: step 5/7. Catalyzes the specific phosphorylation of the 3-hydroxyl group of shikimic acid using ATP as a cosubstrate. The protein is Shikimate kinase of Prosthecochloris aestuarii (strain DSM 271 / SK 413).